The sequence spans 312 residues: Olfactory receptor 2J2 (312 aa).

The Extracellular segment spans residues 1-26 (MMIKKNASSEDFFILLGFSNWPQLEV). N6 carries an N-linked (GlcNAc...) asparagine glycan. A helical transmembrane segment spans residues 27-50 (VLFVVILIFYLMTLTGNLFIIILS). At 51-58 (YVDSHLHT) the chain is on the cytoplasmic side. A helical transmembrane segment spans residues 59–80 (PMYFFLSNLSFLDLCHTTSSIP). Topologically, residues 81-101 (QLLVNLRGPEKTISYAGCMVQ) are extracellular. C98 and C190 are oxidised to a cystine. Residues 102 to 121 (LYFVLALGIAECVLLVVMSY) traverse the membrane as a helical segment. Residues 122–140 (DRYVAVCRPLHYTVLMHPR) are Cytoplasmic-facing. The chain crosses the membrane as a helical span at residues 141–159 (FCHLLAAASWVIGFTISAL). At 160 to 196 (HSSFTFWVPLCGHRLVDHFFCEVPALLRLSCVDTHAN) the chain is on the extracellular side. The helical transmembrane segment at 197–220 (ELTLMVMSSIFVLIPLILILTAYG) threads the bilayer. Residues 221-237 (AIARAVLSMQSTTGLQK) lie on the Cytoplasmic side of the membrane. A helical membrane pass occupies residues 238-260 (VFRTCGAHLMVVSLFFIPVMCMY). Over 261–273 (LQPPSENSPDQGK) the chain is Extracellular. The helical transmembrane segment at 274–293 (FIALFYTVVTPSLNPLIYTL) threads the bilayer. The Cytoplasmic portion of the chain corresponds to 294 to 312 (RNKHVKGAAKRLLGWEWGK).

The protein belongs to the G-protein coupled receptor 1 family.

It localises to the cell membrane. Functionally, odorant receptor. In Homo sapiens (Human), this protein is Olfactory receptor 2J2 (OR2J2).